The primary structure comprises 152 residues: Protein-export protein SecB (152 aa).

Belongs to the SecB family. As to quaternary structure, homotetramer, a dimer of dimers. One homotetramer interacts with 1 SecA dimer.

Its subcellular location is the cytoplasm. Functionally, one of the proteins required for the normal export of preproteins out of the cell cytoplasm. It is a molecular chaperone that binds to a subset of precursor proteins, maintaining them in a translocation-competent state. It also specifically binds to its receptor SecA. The protein is Protein-export protein SecB of Rickettsia rickettsii (strain Iowa).